A 34-amino-acid polypeptide reads, in one-letter code: Photosystem II reaction center protein M (34 aa).

A helical membrane pass occupies residues 5-25 (ILAFIATALFILVPTSFLLII).

The protein belongs to the PsbM family. As to quaternary structure, PSII is composed of 1 copy each of membrane proteins PsbA, PsbB, PsbC, PsbD, PsbE, PsbF, PsbH, PsbI, PsbJ, PsbK, PsbL, PsbM, PsbT, PsbX, PsbY, PsbZ, Psb30/Ycf12, at least 3 peripheral proteins of the oxygen-evolving complex and a large number of cofactors. It forms dimeric complexes.

It is found in the plastid. Its subcellular location is the chloroplast thylakoid membrane. In terms of biological role, one of the components of the core complex of photosystem II (PSII). PSII is a light-driven water:plastoquinone oxidoreductase that uses light energy to abstract electrons from H(2)O, generating O(2) and a proton gradient subsequently used for ATP formation. It consists of a core antenna complex that captures photons, and an electron transfer chain that converts photonic excitation into a charge separation. This subunit is found at the monomer-monomer interface. This is Photosystem II reaction center protein M from Triticum aestivum (Wheat).